Here is a 336-residue protein sequence, read N- to C-terminus: tRNA N6-adenosine threonylcarbamoyltransferase (336 aa).

The Fe cation site is built by H114 and H118. Substrate is bound by residues 136 to 140, D169, G182, D186, and N275; that span reads LVSGG. D302 is a Fe cation binding site.

It belongs to the KAE1 / TsaD family. The cofactor is Fe(2+).

It localises to the cytoplasm. It carries out the reaction L-threonylcarbamoyladenylate + adenosine(37) in tRNA = N(6)-L-threonylcarbamoyladenosine(37) in tRNA + AMP + H(+). Required for the formation of a threonylcarbamoyl group on adenosine at position 37 (t(6)A37) in tRNAs that read codons beginning with adenine. Is involved in the transfer of the threonylcarbamoyl moiety of threonylcarbamoyl-AMP (TC-AMP) to the N6 group of A37, together with TsaE and TsaB. TsaD likely plays a direct catalytic role in this reaction. This chain is tRNA N6-adenosine threonylcarbamoyltransferase, found in Streptococcus agalactiae serotype V (strain ATCC BAA-611 / 2603 V/R).